The sequence spans 194 residues: Large ribosomal subunit protein bL9 (194 aa).

Positions 165-194 (PEDAEEAVANEEEAEAALLDDEDADEYEQG) are disordered. The span at 166-194 (EDAEEAVANEEEAEAALLDDEDADEYEQG) shows a compositional bias: acidic residues.

It belongs to the bacterial ribosomal protein bL9 family.

In terms of biological role, binds to the 23S rRNA. This is Large ribosomal subunit protein bL9 from Rhodospirillum rubrum (strain ATCC 11170 / ATH 1.1.1 / DSM 467 / LMG 4362 / NCIMB 8255 / S1).